A 373-amino-acid chain; its full sequence is DNA replication and repair protein RecF (373 aa).

30-37 lines the ATP pocket; it reads GPNGQGKT.

Belongs to the RecF family.

It is found in the cytoplasm. Functionally, the RecF protein is involved in DNA metabolism; it is required for DNA replication and normal SOS inducibility. RecF binds preferentially to single-stranded, linear DNA. It also seems to bind ATP. This chain is DNA replication and repair protein RecF, found in Streptomyces avermitilis (strain ATCC 31267 / DSM 46492 / JCM 5070 / NBRC 14893 / NCIMB 12804 / NRRL 8165 / MA-4680).